We begin with the raw amino-acid sequence, 357 residues long: NmrA-like family domain-containing oxidoreductase notA' (357 aa).

NADP(+)-binding positions include 13-18 (GATGAQ), 39-43 (RKPES), 60-61 (DG), 81-83 (TNS), K140, and 164-167 (YMDV).

This sequence belongs to the NmrA-type oxidoreductase family.

Its function is as follows. NmrA-like family domain-containing oxidoreductase; part of the gene cluster that mediates the biosynthesis of notoamide, a fungal indole alkaloid that belongs to a family of natural products containing a characteristic bicyclo[2.2.2]diazaoctane core. The first step of notoamide biosynthesis involves coupling of L-proline and L-tryptophan by the bimodular NRPS notE', to produce cyclo-L-tryptophan-L-proline called brevianamide F. The reverse prenyltransferase notF' then acts as a deoxybrevianamide E synthase and converts brevianamide F to deoxybrevianamide E via reverse prenylation at C-2 of the indole ring leading to the bicyclo[2.2.2]diazaoctane core. Deoxybrevianamide E is further hydroxylated at C-6 of the indole ring, likely catalyzed by the cytochrome P450 monooxygenase notG', to yield 6-hydroxy-deoxybrevianamide E. 6-hydroxy-deoxybrevianamide E is a specific substrate of the prenyltransferase notC' for normal prenylation at C-7 to produce 6-hydroxy-7-prenyl-deoxybrevianamide, also called notoamide S. As the proposed pivotal branching point in notoamide biosynthesis, notoamide S can be diverted to notoamide E through an oxidative pyran ring closure putatively catalyzed by either notH' cytochrome P450 monooxygenase or the notD' FAD-linked oxidoreductase. This step would be followed by an indole 2,3-epoxidation-initiated pinacol-like rearrangement catalyzed by the notB' FAD-dependent monooxygenase leading to the formation of notoamide C and notoamide D. On the other hand notoamide S is converted to notoamide T by notH' (or notD'), a bifunctional oxidase that also functions as the intramolecular Diels-Alderase responsible for generation of (-)-notoamide T. To generate antipodal (+)-notoaminide T, notH (or notD) in Aspergillus strain MF297-2 is expected to catalyze a Diels-Alder reaction leading to the opposite stereochemistry. The remaining oxidoreductase notD' (or notH') likely catalyzes the oxidative pyran ring formation to yield (-)-stephacidin A. The FAD-dependent monooxygenase notI' is highly similar to notB' and is predicted to catalyze a similar conversion from (-)-stephacidin A to (+)-notoamide B via the 2,3-epoxidation of (-)-stephacidin A followed by a pinacol-type rearrangement. Finally, it remains unclear which enzyme could be responsible for the final hydroxylation steps leading to notoamide A and sclerotiamide. This is NmrA-like family domain-containing oxidoreductase notA' from Aspergillus versicolor.